A 279-amino-acid polypeptide reads, in one-letter code: Protein BASIC PENTACYSTEINE2 (279 aa).

The tract at residues 126–167 is disordered; the sequence is TKKRKTNAKAGSTPKAKKPRKPKDENSNNNNNNNTNVTRVKP. The span at 152 to 161 shows a compositional bias: low complexity; the sequence is SNNNNNNNTN.

This sequence belongs to the BBR/BPC family. Expressed in seedlings, leaves and pistils. Detected in the base of flowers and tips of carpels, in sepal and petal vasculature, in pollen grains, in young rosette, in the lateral and tip of primary roots, and in ovule at the exception of the outer integument.

It localises to the nucleus. Transcriptional regulator that specifically binds to GA-rich elements (GAGA-repeats) present in regulatory sequences of genes involved in developmental processes. The chain is Protein BASIC PENTACYSTEINE2 from Arabidopsis thaliana (Mouse-ear cress).